A 347-amino-acid chain; its full sequence is NADH-ubiquinone oxidoreductase chain 2 (347 aa).

10 helical membrane-spanning segments follow: residues Pro3–Ser23, His25–Met45, Leu60–Phe80, Ala96–Pro116, Ile149–Gly169, Ile178–Pro198, Met200–Met220, Ala237–Leu257, Glu274–Met294, and Met323–Leu343.

The protein belongs to the complex I subunit 2 family. Core subunit of respiratory chain NADH dehydrogenase (Complex I) which is composed of 45 different subunits. Interacts with TMEM242.

Its subcellular location is the mitochondrion inner membrane. It carries out the reaction a ubiquinone + NADH + 5 H(+)(in) = a ubiquinol + NAD(+) + 4 H(+)(out). Functionally, core subunit of the mitochondrial membrane respiratory chain NADH dehydrogenase (Complex I) which catalyzes electron transfer from NADH through the respiratory chain, using ubiquinone as an electron acceptor. Essential for the catalytic activity and assembly of complex I. The protein is NADH-ubiquinone oxidoreductase chain 2 of Mungos mungo (Banded mongoose).